The sequence spans 445 residues: Tubulin beta-1 chain (445 aa).

The MREI motif signature appears at 1 to 4; sequence MREI. GTP-binding residues include Gln-11, Glu-69, Ser-138, Gly-142, Thr-143, Gly-144, Asn-204, and Asn-226. Glu-69 contributes to the Mg(2+) binding site. Positions 425-445 are disordered; it reads YQDATAEEEGEFEEEGEEELA. Positions 429–445 are enriched in acidic residues; sequence TAEEEGEFEEEGEEELA. Residue Glu-438 is modified to 5-glutamyl polyglutamate.

This sequence belongs to the tubulin family. Dimer of alpha and beta chains. A typical microtubule is a hollow water-filled tube with an outer diameter of 25 nm and an inner diameter of 15 nM. Alpha-beta heterodimers associate head-to-tail to form protofilaments running lengthwise along the microtubule wall with the beta-tubulin subunit facing the microtubule plus end conferring a structural polarity. Microtubules usually have 13 protofilaments but different protofilament numbers can be found in some organisms and specialized cells. Mg(2+) is required as a cofactor. Some glutamate residues at the C-terminus are polyglycylated, resulting in polyglycine chains on the gamma-carboxyl group. Glycylation is mainly limited to tubulin incorporated into axonemes (cilia and flagella) whereas glutamylation is prevalent in neuronal cells, centrioles, axonemes, and the mitotic spindle. Both modifications can coexist on the same protein on adjacent residues, and lowering polyglycylation levels increases polyglutamylation, and reciprocally. The precise function of polyglycylation is still unclear. In terms of processing, some glutamate residues at the C-terminus are polyglutamylated, resulting in polyglutamate chains on the gamma-carboxyl group. Polyglutamylation plays a key role in microtubule severing by spastin (SPAST). SPAST preferentially recognizes and acts on microtubules decorated with short polyglutamate tails: severing activity by SPAST increases as the number of glutamates per tubulin rises from one to eight, but decreases beyond this glutamylation threshold.

The protein resides in the cytoplasm. It localises to the cytoskeleton. Its function is as follows. Tubulin is the major constituent of microtubules, a cylinder consisting of laterally associated linear protofilaments composed of alpha- and beta-tubulin heterodimers. Microtubules grow by the addition of GTP-tubulin dimers to the microtubule end, where a stabilizing cap forms. Below the cap, tubulin dimers are in GDP-bound state, owing to GTPase activity of alpha-tubulin. The chain is Tubulin beta-1 chain from Gadus morhua (Atlantic cod).